Reading from the N-terminus, the 62-residue chain is uncharacterized protein (62 aa).

Residues 1–13 (MGESKSPQESSSE) are compositionally biased toward polar residues. The tract at residues 1 to 62 (MGESKSPQES…SRREFRRKSG (62 aa)) is disordered. Basic and acidic residues predominate over residues 14 to 28 (GETKRKFREALDRKM).

This is an uncharacterized protein from Mycobacterium tuberculosis (strain ATCC 25618 / H37Rv).